Reading from the N-terminus, the 308-residue chain is GDP-L-colitose synthase (308 aa).

NADP(+) is bound by residues 7–13 and 101–104; these read GAGGMVG and LGSS. The Proton donor/acceptor role is filled by Y132. NADP(+)-binding positions include K136, 160–163, and H176; that span reads PCNL. 3 residues coordinate substrate: K184, W199, and R206.

It belongs to the NAD(P)-dependent epimerase/dehydratase family. Fucose synthase subfamily. In terms of assembly, homodimer.

The enzyme catalyses GDP-beta-L-colitose + NAD(+) = GDP-4-dehydro-3,6-dideoxy-alpha-D-mannose + NADH + H(+). It catalyses the reaction GDP-beta-L-colitose + NADP(+) = GDP-4-dehydro-3,6-dideoxy-alpha-D-mannose + NADPH + H(+). It participates in nucleotide-sugar metabolism; GDP-L-colitose biosynthesis. Involved in the biosynthesis of the L-colitose (3,6-dideoxyl-L-xylo-hexose) present in the O-antigen region of lipopolysaccharides (LPS) where it serves as antigenic determinant and are vital for bacterial defense and survival. Catalyzes the two-step NADP-dependent conversion of GDP-4-keto-3,6-dideoxy-D-mannose to GDP-L-colitose. ColC is a bifunctional enzyme catalyzing the C-5 epimerization of GDP-4-keto-3,6-dideoxy-D-mannose and the subsequent C-4 keto reduction of the resulting L-epimer to give GDP-L-colitose. It can use both NADP(+) and NAD(+) as electron acceptor, with a slight preference for NADP(+). The sequence is that of GDP-L-colitose synthase from Yersinia pseudotuberculosis.